The following is a 626-amino-acid chain: Fructose-1,6-bisphosphatase class 3 (626 aa).

It belongs to the FBPase class 3 family. It depends on Mn(2+) as a cofactor.

The enzyme catalyses beta-D-fructose 1,6-bisphosphate + H2O = beta-D-fructose 6-phosphate + phosphate. The protein operates within carbohydrate biosynthesis; gluconeogenesis. The protein is Fructose-1,6-bisphosphatase class 3 of Enterococcus faecalis (strain ATCC 700802 / V583).